A 313-amino-acid chain; its full sequence is Aspartate carbamoyltransferase catalytic subunit (313 aa).

Residues R58 and T59 each coordinate carbamoyl phosphate. K86 is an L-aspartate binding site. R108, H136, and Q139 together coordinate carbamoyl phosphate. 2 residues coordinate L-aspartate: R169 and R224. Carbamoyl phosphate is bound by residues G265 and P266.

Belongs to the aspartate/ornithine carbamoyltransferase superfamily. ATCase family. In terms of assembly, heterododecamer (2C3:3R2) of six catalytic PyrB chains organized as two trimers (C3), and six regulatory PyrI chains organized as three dimers (R2).

The catalysed reaction is carbamoyl phosphate + L-aspartate = N-carbamoyl-L-aspartate + phosphate + H(+). Its pathway is pyrimidine metabolism; UMP biosynthesis via de novo pathway; (S)-dihydroorotate from bicarbonate: step 2/3. Catalyzes the condensation of carbamoyl phosphate and aspartate to form carbamoyl aspartate and inorganic phosphate, the committed step in the de novo pyrimidine nucleotide biosynthesis pathway. The chain is Aspartate carbamoyltransferase catalytic subunit from Natranaerobius thermophilus (strain ATCC BAA-1301 / DSM 18059 / JW/NM-WN-LF).